Here is a 396-residue protein sequence, read N- to C-terminus: Elongation factor Tu (396 aa).

Positions 10-206 (KPHVNVGTIG…VLDTYIPEPE (197 aa)) constitute a tr-type G domain. Residues 19–26 (GHVDHGKT) are G1. Residue 19-26 (GHVDHGKT) participates in GTP binding. Thr-26 serves as a coordination point for Mg(2+). Residues 60–64 (GITIN) form a G2 region. The interval 81 to 84 (DCPG) is G3. GTP-binding positions include 81–85 (DCPGH) and 136–139 (NKCD). The segment at 136 to 139 (NKCD) is G4. The interval 174-176 (SAT) is G5.

Belongs to the TRAFAC class translation factor GTPase superfamily. Classic translation factor GTPase family. EF-Tu/EF-1A subfamily. In terms of assembly, monomer.

Its subcellular location is the cytoplasm. The enzyme catalyses GTP + H2O = GDP + phosphate + H(+). Its function is as follows. GTP hydrolase that promotes the GTP-dependent binding of aminoacyl-tRNA to the A-site of ribosomes during protein biosynthesis. This is Elongation factor Tu from Psychrobacter cryohalolentis (strain ATCC BAA-1226 / DSM 17306 / VKM B-2378 / K5).